A 236-amino-acid polypeptide reads, in one-letter code: Probable transcriptional regulatory protein FP0835 (236 aa).

Belongs to the TACO1 family.

The protein localises to the cytoplasm. The chain is Probable transcriptional regulatory protein FP0835 from Flavobacterium psychrophilum (strain ATCC 49511 / DSM 21280 / CIP 103535 / JIP02/86).